A 517-amino-acid polypeptide reads, in one-letter code: 2-isopropylmalate synthase (517 aa).

In terms of domain architecture, Pyruvate carboxyltransferase spans 7–269; the sequence is VIIFDTTLRD…ETGIDTTQIV (263 aa). Residues D16, H204, H206, and N240 each contribute to the Mn(2+) site. The segment at 366–517 is required for the condensation reaction. Not required to bind substrate; that stretch reads LADKKREIFD…KPKAQGSGTI (152 aa). The interval 395–517 is regulatory domain; that stretch reads KFISQKISTE…KPKAQGSGTI (123 aa).

It belongs to the alpha-IPM synthase/homocitrate synthase family. LeuA type 1 subfamily. In terms of assembly, homodimer. Remains a homodimer in the presence of L-leucine. It depends on Mn(2+) as a cofactor.

It localises to the cytoplasm. The enzyme catalyses 3-methyl-2-oxobutanoate + acetyl-CoA + H2O = (2S)-2-isopropylmalate + CoA + H(+). Its pathway is amino-acid biosynthesis; L-leucine biosynthesis; L-leucine from 3-methyl-2-oxobutanoate: step 1/4. Inhibited by 3-bromo substituents and Leu, the pathway end product. In terms of biological role, catalyzes the condensation of the acetyl group of acetyl-CoA with 3-methyl-2-oxobutanoate (2-ketoisovalerate) to form 3-carboxy-3-hydroxy-4-methylpentanoate (2-isopropylmalate). Complements an E.coli deletion. This chain is 2-isopropylmalate synthase, found in Neisseria meningitidis serogroup B (strain ATCC BAA-335 / MC58).